The chain runs to 94 residues: Acylphosphatase (94 aa).

Residues 8–94 (ALHVIVKGRV…RGYTDFRIEV (87 aa)) form the Acylphosphatase-like domain. Active-site residues include R23 and N41.

This sequence belongs to the acylphosphatase family.

It carries out the reaction an acyl phosphate + H2O = a carboxylate + phosphate + H(+). This chain is Acylphosphatase (acyP), found in Treponema denticola (strain ATCC 35405 / DSM 14222 / CIP 103919 / JCM 8153 / KCTC 15104).